Here is a 233-residue protein sequence, read N- to C-terminus: Leucyl/phenylalanyl-tRNA--protein transferase (233 aa).

Belongs to the L/F-transferase family.

The protein localises to the cytoplasm. It carries out the reaction N-terminal L-lysyl-[protein] + L-leucyl-tRNA(Leu) = N-terminal L-leucyl-L-lysyl-[protein] + tRNA(Leu) + H(+). The catalysed reaction is N-terminal L-arginyl-[protein] + L-leucyl-tRNA(Leu) = N-terminal L-leucyl-L-arginyl-[protein] + tRNA(Leu) + H(+). It catalyses the reaction L-phenylalanyl-tRNA(Phe) + an N-terminal L-alpha-aminoacyl-[protein] = an N-terminal L-phenylalanyl-L-alpha-aminoacyl-[protein] + tRNA(Phe). Its function is as follows. Functions in the N-end rule pathway of protein degradation where it conjugates Leu, Phe and, less efficiently, Met from aminoacyl-tRNAs to the N-termini of proteins containing an N-terminal arginine or lysine. The polypeptide is Leucyl/phenylalanyl-tRNA--protein transferase (Laribacter hongkongensis (strain HLHK9)).